Reading from the N-terminus, the 391-residue chain is Succinate--CoA ligase [ADP-forming] subunit beta (391 aa).

The ATP-grasp domain maps to 9-246; sequence KHLFTEAGIA…LTQEDETEVR (238 aa). ATP is bound by residues Lys-46, 53–55, Glu-99, Leu-102, and Glu-107; that span reads GRG. Asn-199 and Asp-213 together coordinate Mg(2+). Substrate-binding positions include Asn-266 and 323–325; that span reads GIV.

It belongs to the succinate/malate CoA ligase beta subunit family. As to quaternary structure, heterotetramer of two alpha and two beta subunits. The cofactor is Mg(2+).

The catalysed reaction is succinate + ATP + CoA = succinyl-CoA + ADP + phosphate. It carries out the reaction GTP + succinate + CoA = succinyl-CoA + GDP + phosphate. The protein operates within carbohydrate metabolism; tricarboxylic acid cycle; succinate from succinyl-CoA (ligase route): step 1/1. Functionally, succinyl-CoA synthetase functions in the citric acid cycle (TCA), coupling the hydrolysis of succinyl-CoA to the synthesis of either ATP or GTP and thus represents the only step of substrate-level phosphorylation in the TCA. The beta subunit provides nucleotide specificity of the enzyme and binds the substrate succinate, while the binding sites for coenzyme A and phosphate are found in the alpha subunit. The sequence is that of Succinate--CoA ligase [ADP-forming] subunit beta from Halorhodospira halophila (strain DSM 244 / SL1) (Ectothiorhodospira halophila (strain DSM 244 / SL1)).